The sequence spans 1487 residues: Protein clueless (1487 aa).

Disordered regions lie at residues 1-94 (MALE…NGDA) and 110-140 (GATAAAGATEAAAEVGSSGDGGAATEGEAAA). Residues 56–65 (TKKKGKKNRN) are compositionally biased toward basic residues. Positions 111 to 126 (ATAAAGATEAAAEVGS) are enriched in low complexity. At serine 284 the chain carries Phosphoserine. In terms of domain architecture, Clu spans 438-680 (RAEDAFSSKL…RTFPPDVNFL (243 aa)). Residues 739 to 785 (QAEKELPSITEKQEEPEKEQAEKSSAEQPEKEKEKEKDKEDEQKESK) are compositionally biased toward basic and acidic residues. Disordered regions lie at residues 739 to 794 (QAEK…TKSA) and 980 to 1040 (VSSE…TAST). Residues 988–1005 (KQSRNNGGKHNKHNKSNK) show a composition bias toward basic residues. Positions 1009 to 1019 (PQSTSAAAATQ) are enriched in polar residues. The segment covering 1020–1040 (NGHSSTAANGSANSAANTAST) has biased composition (low complexity). 3 TPR repeats span residues 1140–1173 (AYNFYTTGQAKIQQGLLKEGYELISEALNLLNNV), 1266–1299 (ALIDSNISLILHALGEYELSLRFIEHALKLNLKY), and 1301–1334 (GNKAMHVAVSYHLMARIQSCMGDFRSALNNEKET). The interval 1456–1487 (DTEQPKEGSEVEGATATQLTNGSEDSTTTVSS) is disordered. Over residues 1470–1487 (TATQLTNGSEDSTTTVSS) the composition is skewed to polar residues.

The protein belongs to the CLU family.

It is found in the cytoplasm. MRNA-binding protein involved in proper cytoplasmic distribution of mitochondria. The sequence is that of Protein clueless from Drosophila mojavensis (Fruit fly).